We begin with the raw amino-acid sequence, 725 residues long: MVMKASVDDDDSGWELSMPEKMEKSNTNWVDITQDFEEACRELKLGELLHDKLFGLFEAMSAIEMMDPKMDAGMIGNQVNRKVLNFEQAIKDGTIKIKDLTLPELIGIMDTCFCCLITWLEGHSLAQTVFTCLYIHNPDFIEDPAMKAFALGILKICDIAREKVNKAAVFEEEDFQSMTYGFKMANSVTDLRVTGMLKDVEDDMQRRVKSTRSRQGEERDPEVELEHQQCLAVFSRVKFTRVLLTVLIAFTKKETSAVAEAQKLMVQAADLLSAIHNSLHHGIQAQNDTTKGDHPIMMGFEPLVNQRLLPPTFPRYAKIIKREEMVNYFARLIDRIKTVCEVVNLTNLHCILDFFCEFSEQSPCVLSRSLLQTTFLVDNKKVFGTHLMQDMVKDALRSFVSPPVLSPKCYLYNNHQAKDCIDSFVTHCVRPFCSLIQIHGHNRARQRDKLGHILEEFATLQDEAEKVDAALHTMLLKQEPQRQHLACLGTWVLYHNLRIMIQYLLSGFELELYSMHEYYYIYWYLSEFLYAWLMSTLSRADGSQMAEERIMEEQQKGRSSKKTKKKKKVRPLSREITMSQAYQNMCAGMFKTMVAFDMDGKVRKPKFELDSEQVRYEHRFAPFNSVMTPPPVHYLQFKEMSDLNKYSPPPQSPELYVAASKHFQQAKMILENIPNPDHEVNRILKVAKPNFVVMKLLAGGHKKESKVPPEFDFSAHKYFPVVKLV.

The residue at position 187 (S187) is a Phosphoserine. Residues 548 to 573 (ERIMEEQQKGRSSKKTKKKKKVRPLS) form a disordered region. A compositionally biased stretch (basic residues) spans 558–571 (RSSKKTKKKKKVRP).

Belongs to the MAK10 family. Component of the N-terminal acetyltransferase C (NatC) complex, which is composed of NAA35, NAA38 and NAA30.

It localises to the cytoplasm. Its function is as follows. Auxillary component of the N-terminal acetyltransferase C (NatC) complex which catalyzes acetylation of N-terminal methionine residues. N-terminal acetylation protects proteins from ubiquitination and degradation by the N-end rule pathway. Involved in regulation of apoptosis and proliferation of smooth muscle cells. In Homo sapiens (Human), this protein is N-alpha-acetyltransferase 35, NatC auxiliary subunit (NAA35).